The chain runs to 494 residues: Transmembrane and coiled-coil domain-containing protein 6 (494 aa).

Positions glycine 15–leucine 39 form a coiled coil. Transmembrane regions (helical) follow at residues leucine 338 to proline 358 and proline 386 to cysteine 406.

It localises to the membrane. This Mus musculus (Mouse) protein is Transmembrane and coiled-coil domain-containing protein 6 (Tmco6).